The chain runs to 478 residues: UDP-N-acetylmuramate--L-alanine ligase (478 aa).

It belongs to the MurCDEF family.

It is found in the cytoplasm. It carries out the reaction UDP-N-acetyl-alpha-D-muramate + L-alanine + ATP = UDP-N-acetyl-alpha-D-muramoyl-L-alanine + ADP + phosphate + H(+). The protein operates within cell wall biogenesis; peptidoglycan biosynthesis. Cell wall formation. The protein is UDP-N-acetylmuramate--L-alanine ligase (murC) of Synechococcus elongatus (strain ATCC 33912 / PCC 7942 / FACHB-805) (Anacystis nidulans R2).